The sequence spans 270 residues: 3-methyl-2-oxobutanoate hydroxymethyltransferase (270 aa).

Mg(2+) contacts are provided by aspartate 41 and aspartate 80. 3-methyl-2-oxobutanoate-binding positions include 41 to 42, aspartate 80, and lysine 109; that span reads DS. Residue glutamate 111 participates in Mg(2+) binding. The active-site Proton acceptor is glutamate 178.

It belongs to the PanB family. As to quaternary structure, homodecamer; pentamer of dimers. The cofactor is Mg(2+).

The protein localises to the cytoplasm. It carries out the reaction 3-methyl-2-oxobutanoate + (6R)-5,10-methylene-5,6,7,8-tetrahydrofolate + H2O = 2-dehydropantoate + (6S)-5,6,7,8-tetrahydrofolate. It participates in cofactor biosynthesis; (R)-pantothenate biosynthesis; (R)-pantoate from 3-methyl-2-oxobutanoate: step 1/2. In terms of biological role, catalyzes the reversible reaction in which hydroxymethyl group from 5,10-methylenetetrahydrofolate is transferred onto alpha-ketoisovalerate to form ketopantoate. The chain is 3-methyl-2-oxobutanoate hydroxymethyltransferase from Thermotoga neapolitana (strain ATCC 49049 / DSM 4359 / NBRC 107923 / NS-E).